The primary structure comprises 251 residues: Duodenase-1 (251 aa).

The signal sequence occupies residues 1–17; that stretch reads MVLLLLLVALLSPTGEA. Residues 18-19 constitute a propeptide that is removed on maturation; sequence GK. Residues 20-242 form the Peptidase S1 domain; sequence IIGGHEAKPH…SFLSWIHSTM (223 aa). C48 and C64 are oxidised to a cystine. The Charge relay system role is filled by H63. N-linked (GlcNAc...) asparagine glycosylation is present at N70. The active-site Charge relay system is D107. 2 disulfides stabilise this stretch: C141/C207 and C172/C186. The Charge relay system role is filled by S201.

It belongs to the peptidase S1 family. As to quaternary structure, monomer.

Protease which has both trypsin-like and chymotrypsin-like activities. Shows a preferential cleavage after Lys, Arg, Tyr, Phe, and Leu residues. The chain is Duodenase-1 (BDMD1) from Bos taurus (Bovine).